The following is a 129-amino-acid chain: Ribulose bisphosphate carboxylase small subunit (129 aa).

The tract at residues 109 to 129 (LRMTRTESNGRSQHYMWETQR) is disordered.

The protein belongs to the RuBisCO small chain family. As to quaternary structure, heterohexadecamer of 8 large and 8 small subunits.

Functionally, ruBisCO catalyzes two reactions: the carboxylation of D-ribulose 1,5-bisphosphate, the primary event in carbon dioxide fixation, as well as the oxidative fragmentation of the pentose substrate. Both reactions occur simultaneously and in competition at the same active site. Although the small subunit is not catalytic it is essential for maximal activity. This chain is Ribulose bisphosphate carboxylase small subunit, found in Rhizobium meliloti (strain 1021) (Ensifer meliloti).